Consider the following 469-residue polypeptide: tRNA(Ile)-lysidine synthase (469 aa).

Residue 26–31 (SGGPDS) participates in ATP binding.

It belongs to the tRNA(Ile)-lysidine synthase family.

Its subcellular location is the cytoplasm. It catalyses the reaction cytidine(34) in tRNA(Ile2) + L-lysine + ATP = lysidine(34) in tRNA(Ile2) + AMP + diphosphate + H(+). Its function is as follows. Ligates lysine onto the cytidine present at position 34 of the AUA codon-specific tRNA(Ile) that contains the anticodon CAU, in an ATP-dependent manner. Cytidine is converted to lysidine, thus changing the amino acid specificity of the tRNA from methionine to isoleucine. The chain is tRNA(Ile)-lysidine synthase from Shouchella clausii (strain KSM-K16) (Alkalihalobacillus clausii).